The primary structure comprises 158 residues: 2-C-methyl-D-erythritol 2,4-cyclodiphosphate synthase (158 aa).

Residues Asp9 and His11 each coordinate a divalent metal cation. 4-CDP-2-C-methyl-D-erythritol 2-phosphate-binding positions include Asp9–His11 and His35–Ser36. A divalent metal cation is bound at residue His43. 4-CDP-2-C-methyl-D-erythritol 2-phosphate contacts are provided by residues Asp57–Gly59, Phe62–Asp66, Ala101–Ala107, Thr133–Glu136, Phe140, and Arg143.

It belongs to the IspF family. As to quaternary structure, homotrimer. A divalent metal cation is required as a cofactor.

The enzyme catalyses 4-CDP-2-C-methyl-D-erythritol 2-phosphate = 2-C-methyl-D-erythritol 2,4-cyclic diphosphate + CMP. Its pathway is isoprenoid biosynthesis; isopentenyl diphosphate biosynthesis via DXP pathway; isopentenyl diphosphate from 1-deoxy-D-xylulose 5-phosphate: step 4/6. In terms of biological role, involved in the biosynthesis of isopentenyl diphosphate (IPP) and dimethylallyl diphosphate (DMAPP), two major building blocks of isoprenoid compounds. Catalyzes the conversion of 4-diphosphocytidyl-2-C-methyl-D-erythritol 2-phosphate (CDP-ME2P) to 2-C-methyl-D-erythritol 2,4-cyclodiphosphate (ME-CPP) with a corresponding release of cytidine 5-monophosphate (CMP). The chain is 2-C-methyl-D-erythritol 2,4-cyclodiphosphate synthase from Vibrio vulnificus (strain CMCP6).